We begin with the raw amino-acid sequence, 440 residues long: MKVHLTSLGCAKNQVDSELMLGAFAAEGLTVCDDPAGADVLVVNTCAFIEDAVNEAVDTILALARYKSEGSCRRLIVCGCLPERFGEELAGALPEADFFFGTGAYHRVIEAVAGKESTLSRCTLPPPDAVPMQAAADRRICATPHTVYVKIAEGCDRRCTYCIIPRLRGRQRSRPPADIVVEARGLVAAGAKELVLVAQETTAYGADLSPPVSLASLLMALSDAVGDIWVRVLYMHPDTMDPDLIRVMTERDNLCSYFDVPVQHASDRVLKRMGRRHTAADLHRLFDDIRRADPDAVLRTTVLVGFPGEKPADFEKLLDFITGVAFDHLGAFIYSDDEALSSHGLDGHVSSKTARHRYDRVMTAQIDISSRRLAKRVGSREPVLVEEKAEDGLFFGRAWFQAPEVDGDVCFSGAGDYAPGDRVSVRITGASAYDLTGEAQ.

The MTTase N-terminal domain occupies 1–117; sequence MKVHLTSLGC…VIEAVAGKES (117 aa). [4Fe-4S] cluster contacts are provided by C10, C46, C80, C155, C159, and C162. The Radical SAM core domain occupies 141-371; it reads CATPHTVYVK…MTAQIDISSR (231 aa). A TRAM domain is found at 374-440; that stretch reads AKRVGSREPV…SAYDLTGEAQ (67 aa).

This sequence belongs to the methylthiotransferase family. RimO subfamily. [4Fe-4S] cluster is required as a cofactor.

The protein resides in the cytoplasm. The enzyme catalyses L-aspartate(89)-[ribosomal protein uS12]-hydrogen + (sulfur carrier)-SH + AH2 + 2 S-adenosyl-L-methionine = 3-methylsulfanyl-L-aspartate(89)-[ribosomal protein uS12]-hydrogen + (sulfur carrier)-H + 5'-deoxyadenosine + L-methionine + A + S-adenosyl-L-homocysteine + 2 H(+). In terms of biological role, catalyzes the methylthiolation of an aspartic acid residue of ribosomal protein uS12. This Desulfosudis oleivorans (strain DSM 6200 / JCM 39069 / Hxd3) (Desulfococcus oleovorans) protein is Ribosomal protein uS12 methylthiotransferase RimO.